Here is a 224-residue protein sequence, read N- to C-terminus: 25 kDa integral membrane protein (224 aa).

Over 1–12 (MKLSFTKVSLTN) the chain is Cytoplasmic. The helical transmembrane segment at 13-33 (ILILFNCLFIIFSMIVLTFGV) threads the bilayer. Residues 34–52 (IPQIYLLKFANILHGVRPS) lie on the Extracellular side of the membrane. The chain crosses the membrane as a helical span at residues 53–73 (IFPIVCFTGSFVIIVACVGII). Residues 74 to 80 (GLMKGGK) lie on the Cytoplasmic side of the membrane. Residues 81-101 (CLLTMHIIALIIATIIDISTA) form a helical membrane-spanning segment. Topologically, residues 102–189 (TLSAIKQNEF…LNKYVRYYID (88 aa)) are extracellular. An N-linked (GlcNAc...) asparagine glycan is attached at asparagine 120. The chain crosses the membrane as a helical span at residues 190 to 210 (ILIYLCFIFGFIKLIYSLFTF). The Cytoplasmic portion of the chain corresponds to 211-224 (TQRQRIFSEKTPVA).

This sequence belongs to the tetraspanin (TM4SF) family.

Its subcellular location is the membrane. The protein is 25 kDa integral membrane protein of Schistosoma japonicum (Blood fluke).